Consider the following 515-residue polypeptide: Galactokinase (515 aa).

Alpha-D-galactose is bound by residues R48, D54, H55, and D57. ATP is bound by residues G155, G157, S159, and S160. D205 serves as a coordination point for alpha-D-galactose. D205 serves as the catalytic Proton acceptor. ATP contacts are provided by S249, N250, and K251. Y259 contributes to the alpha-D-galactose binding site.

Belongs to the GHMP kinase family. GalK subfamily.

It catalyses the reaction alpha-D-galactose + ATP = alpha-D-galactose 1-phosphate + ADP + H(+). Its pathway is carbohydrate metabolism; galactose metabolism. Its function is as follows. Galactokinase is a key enzyme in the galactose metabolism where it catalyzes the conversion of alpha-D-galactose to galactose 1-phosphate. Can also induce the transcription of the gal genes in response to the organism being challenged with galactose as the sole source of carbon. The protein is Galactokinase of Candida albicans (Yeast).